Consider the following 286-residue polypeptide: E3 ubiquitin-protein ligase SINA-like 7 (286 aa).

An RING-type zinc finger spans residues 51–87; that stretch reads CPICYEAFTIPIFQCDNGHLACSSCCPKLNNKCPACT. The interval 101 to 285 is SBD; the sequence is VLESILIPCP…MRISVKKLNK (185 aa). The segment at 104–162 adopts an SIAH-type zinc-finger fold; the sequence is SILIPCPNAKLGCKKNVSYGKELTHEKECMFSHCACPALDCNYTSSYKDLYTHYRITHM. Positions 109, 116, 128, 132, 139, 144, 156, and 161 each coordinate Zn(2+).

The protein belongs to the SINA (Seven in absentia) family.

The enzyme catalyses S-ubiquitinyl-[E2 ubiquitin-conjugating enzyme]-L-cysteine + [acceptor protein]-L-lysine = [E2 ubiquitin-conjugating enzyme]-L-cysteine + N(6)-ubiquitinyl-[acceptor protein]-L-lysine.. The protein operates within protein modification; protein ubiquitination. In terms of biological role, E3 ubiquitin-protein ligase that mediates ubiquitination and subsequent proteasomal degradation of target proteins. E3 ubiquitin ligases accept ubiquitin from an E2 ubiquitin-conjugating enzyme in the form of a thioester and then directly transfers the ubiquitin to targeted substrates. It probably triggers the ubiquitin-mediated degradation of different substrates. The polypeptide is E3 ubiquitin-protein ligase SINA-like 7 (Arabidopsis thaliana (Mouse-ear cress)).